The sequence spans 160 residues: Early E3 18.5 kDa glycoprotein (160 aa).

The first 17 residues, 1-17, serve as a signal peptide directing secretion; that stretch reads MIRYIILGLLTLASAHG. The Lumenal segment spans residues 18 to 124; the sequence is TTQKVDFKEP…PPQNCVENTG (107 aa). 2 disulfide bridges follow: C29–C46 and C40–C101. N-linked (GlcNAc...) asparagine; by host glycans are attached at residues N30 and N79. A helical membrane pass occupies residues 125-145; it reads TFCCTAMLITVLALVCTLLYI. The Cytoplasmic segment spans residues 146–160; sequence KYKSRRSFIEEKKMP. Residues 157–160 carry the Di-lysine motif motif; sequence KKMP.

It belongs to the adenoviridae E19 family. In terms of processing, both disulfide bonds are absolutely critical for the interaction with MHC antigens. Post-translationally, N-glycosylated; high-mannose.

The protein resides in the host endoplasmic reticulum membrane. Binds and retains class I heavy chains in the endoplasmic reticulum during the early period of virus infection, thereby impairing their transport to the cell surface. Also delays the expression of class I alleles that it cannot affect by direct retention. Binds transporters associated with antigen processing (TAP) and acts as a tapasin inhibitor, preventing class I/TAP association. In consequence, infected cells are masked for immune recognition by cytotoxic T-lymphocytes. The polypeptide is Early E3 18.5 kDa glycoprotein (Homo sapiens (Human)).